The primary structure comprises 161 residues: uncharacterized protein (161 aa).

The next 2 membrane-spanning stretches (helical) occupy residues 13–35 (VAAVFAALYTSILGLAVLIPHAN) and 40–62 (VFSAVMAAGLGILIALLAVPFIS).

The protein resides in the cell membrane. This is an uncharacterized protein from Archaeoglobus fulgidus (strain ATCC 49558 / DSM 4304 / JCM 9628 / NBRC 100126 / VC-16).